The following is a 177-amino-acid chain: Tumor necrosis factor ligand superfamily member 18 (177 aa).

Residues 1–27 are Cytoplasmic-facing; it reads MCLSHLENMPLSHSRTQGAQRSSWKLW. Residues 28-48 traverse the membrane as a helical; Signal-anchor for type II membrane protein segment; it reads LFCSIVMLLFLCSFSWLIFIF. The region spanning 47–170 is the THD domain; that stretch reads IFLQLETAKE…NNTYWGIILL (124 aa). Residues 49 to 177 are Extracellular-facing; the sequence is LQLETAKEPC…ILLANPQFIS (129 aa). Cysteines 58 and 78 form a disulfide. N-linked (GlcNAc...) asparagine glycans are attached at residues Asn-129 and Asn-161.

Belongs to the tumor necrosis factor family. Homodimer. Homotrimer. As to expression, expressed at high levels in the small intestine, ovary, testis, kidney and endothelial cells.

It is found in the cell membrane. Cytokine that binds to TNFRSF18/AITR/GITR. Regulates T-cell responses. Can function as costimulator and lower the threshold for T-cell activation and T-cell proliferation. Important for interactions between activated T-lymphocytes and endothelial cells. Mediates activation of NF-kappa-B. Triggers increased phosphorylation of STAT1 and up-regulates expression of VCAM1 and ICAM1. Promotes leukocyte adhesion to endothelial cells. Regulates migration of monocytes from the splenic reservoir to sites of inflammation. This chain is Tumor necrosis factor ligand superfamily member 18, found in Homo sapiens (Human).